The following is a 70-amino-acid chain: Large ribosomal subunit protein bL31 (70 aa).

Residues C17, C19, C37, and C40 each contribute to the Zn(2+) site.

It belongs to the bacterial ribosomal protein bL31 family. Type A subfamily. As to quaternary structure, part of the 50S ribosomal subunit. It depends on Zn(2+) as a cofactor.

In terms of biological role, binds the 23S rRNA. This is Large ribosomal subunit protein bL31 from Clostridium acetobutylicum (strain ATCC 824 / DSM 792 / JCM 1419 / IAM 19013 / LMG 5710 / NBRC 13948 / NRRL B-527 / VKM B-1787 / 2291 / W).